The following is a 279-amino-acid chain: Fatty acid elongase 2 (279 aa).

Transmembrane regions (helical) follow at residues 16-36 (LMLENVDVLGYLSLGYLALVW), 61-81 (AIIVWNLLLSAFSFFGMIVVV), 112-132 (FWIGMFVLSKAPELVDTMFLL), 138-158 (PPFLHWYHHVTVLIFSWHTYC), 164-184 (MVLFAAMNLTVHFIMYFYFAM), 196-216 (FAPFITMLQILQMVVGSLVTT), and 242-262 (MGVIMYMSYLYLFSEMFLNSY). A HxxHH motif motif is present at residues 142–146 (HWYHH). Catalysis depends on His-145, which acts as the Nucleophile.

This sequence belongs to the ELO family.

The protein localises to the endoplasmic reticulum membrane. It carries out the reaction an acyl-CoA + malonyl-CoA + H(+) = a 3-oxoacyl-CoA + CO2 + CoA. The protein operates within lipid metabolism; fatty acid biosynthesis. Its function is as follows. Involved in the synthesis of fatty acids. Elongates C10 fatty acids to C14. Required for the maintenance of the global lipidome profile in this parasite. This is Fatty acid elongase 2 from Trypanosoma cruzi (strain CL Brener).